Consider the following 143-residue polypeptide: Transcriptional regulator MraZ (143 aa).

SpoVT-AbrB domains follow at residues 5–47 (EFEH…PLSE) and 76–119 (AVQC…NKAR).

The protein belongs to the MraZ family. Forms oligomers.

It is found in the cytoplasm. The protein localises to the nucleoid. The chain is Transcriptional regulator MraZ from Pediococcus pentosaceus (strain ATCC 25745 / CCUG 21536 / LMG 10740 / 183-1w).